The sequence spans 177 residues: Alkyl hydroperoxide reductase AhpD (177 aa).

The active-site Proton donor is C130. C130 and C133 are disulfide-bonded. Residue C133 is the Cysteine sulfenic acid (-SOH) intermediate of the active site.

Belongs to the AhpD family. In terms of assembly, homotrimer.

The catalysed reaction is N(6)-[(R)-dihydrolipoyl]-L-lysyl-[lipoyl-carrier protein] + a hydroperoxide = N(6)-[(R)-lipoyl]-L-lysyl-[lipoyl-carrier protein] + an alcohol + H2O. In terms of biological role, antioxidant protein with alkyl hydroperoxidase activity. Required for the reduction of the AhpC active site cysteine residues and for the regeneration of the AhpC enzyme activity. In Corynebacterium aurimucosum (strain ATCC 700975 / DSM 44827 / CIP 107346 / CN-1) (Corynebacterium nigricans), this protein is Alkyl hydroperoxide reductase AhpD.